We begin with the raw amino-acid sequence, 231 residues long: tRNA1(Val) (adenine(37)-N6)-methyltransferase (231 aa).

Belongs to the methyltransferase superfamily. tRNA (adenine-N(6)-)-methyltransferase family.

The protein localises to the cytoplasm. It carries out the reaction adenosine(37) in tRNA1(Val) + S-adenosyl-L-methionine = N(6)-methyladenosine(37) in tRNA1(Val) + S-adenosyl-L-homocysteine + H(+). Specifically methylates the adenine in position 37 of tRNA(1)(Val) (anticodon cmo5UAC). This Flavobacteriaceae bacterium (strain 3519-10) protein is tRNA1(Val) (adenine(37)-N6)-methyltransferase.